The chain runs to 330 residues: tRNA (cytosine(38)-C(5))-methyltransferase (330 aa).

Residues Leu-7–Phe-330 form the SAM-dependent MTase C5-type domain. Cys-81 is an active-site residue.

It belongs to the class I-like SAM-binding methyltransferase superfamily. C5-methyltransferase family.

It is found in the cytoplasm. The protein localises to the nucleus. It catalyses the reaction cytidine(38) in tRNA + S-adenosyl-L-methionine = 5-methylcytidine(38) in tRNA + S-adenosyl-L-homocysteine + H(+). Specifically methylates cytosine 38 in the anticodon loop of tRNA(Asp). Can also methylate cytosine 38 in tRNA(Glu), albeit to a lower level, but not tRNA(Lys). Pmt1-dependent tRNA methylation is induced by nitrogen limitation and depends on the nutrient-sensing protein kinase sck2. Does not have DNA-methylation activity. The sequence is that of tRNA (cytosine(38)-C(5))-methyltransferase (pmt1) from Schizosaccharomyces pombe (strain 972 / ATCC 24843) (Fission yeast).